Here is a 580-residue protein sequence, read N- to C-terminus: Arginine--tRNA ligase (580 aa).

The 'HIGH' region motif lies at 127–137; sequence PNLAKEMHVGH.

Belongs to the class-I aminoacyl-tRNA synthetase family. In terms of assembly, monomer.

It is found in the cytoplasm. The enzyme catalyses tRNA(Arg) + L-arginine + ATP = L-arginyl-tRNA(Arg) + AMP + diphosphate. This is Arginine--tRNA ligase from Idiomarina loihiensis (strain ATCC BAA-735 / DSM 15497 / L2-TR).